Consider the following 196-residue polypeptide: SPRY domain-containing protein 7 (196 aa).

The B30.2/SPRY domain maps to 1-184 (MAASVFCCLR…FSEFYHTPPP (184 aa)).

The sequence is that of SPRY domain-containing protein 7 (SPRYD7) from Gallus gallus (Chicken).